We begin with the raw amino-acid sequence, 225 residues long: UPF0758 protein NMCC_1157 (225 aa).

Residues 102-224 (VLSDPDTVAD…VRSFRQLGLM (123 aa)) enclose the MPN domain. Zn(2+) is bound by residues His173, His175, and Asp186. The short motif at 173 to 186 (HNHPGGSPEPSQED) is the JAMM motif element.

This sequence belongs to the UPF0758 family.

The polypeptide is UPF0758 protein NMCC_1157 (Neisseria meningitidis serogroup C (strain 053442)).